The primary structure comprises 338 residues: Methionine import ATP-binding protein MetN 2 (338 aa).

The ABC transporter domain occupies 2-242 (IEIEKVCVDF…PQHAFTQQLV (241 aa)). 39 to 46 (GTSGAGKS) is a binding site for ATP.

Belongs to the ABC transporter superfamily. Methionine importer (TC 3.A.1.24) family. As to quaternary structure, the complex is composed of two ATP-binding proteins (MetN), two transmembrane proteins (MetI) and a solute-binding protein (MetQ).

The protein localises to the cell inner membrane. The catalysed reaction is L-methionine(out) + ATP + H2O = L-methionine(in) + ADP + phosphate + H(+). It carries out the reaction D-methionine(out) + ATP + H2O = D-methionine(in) + ADP + phosphate + H(+). In terms of biological role, part of the ABC transporter complex MetNIQ involved in methionine import. Responsible for energy coupling to the transport system. The chain is Methionine import ATP-binding protein MetN 2 from Salmonella choleraesuis (strain SC-B67).